The chain runs to 187 residues: Large ribosomal subunit protein uL18 (187 aa).

It belongs to the universal ribosomal protein uL18 family. As to quaternary structure, part of the 50S ribosomal subunit. Interacts with proteins L5 and L21e, and attaches the 5S rRNA to the 23S rRNA. Has been cross-linked to L21e.

Functionally, this is one of 5 proteins that mediate the attachment of the 5S rRNA onto the large ribosomal subunit, where it forms part of the central protuberance and stabilizes the orientation of adjacent RNA domains. The chain is Large ribosomal subunit protein uL18 (rpl18) from Haloarcula marismortui (strain ATCC 43049 / DSM 3752 / JCM 8966 / VKM B-1809) (Halobacterium marismortui).